Consider the following 796-residue polypeptide: Conidiophore development regulator abaA (796 aa).

The TEA DNA-binding region spans 133–207; sequence GKDGEPVWSD…QVLDSFLKGD (75 aa). Positions 215-254 are disordered; that stretch reads REQSDRSTAQTQPVGPRWRTSMDHLPSSHYGTHATSSYPE. The segment covering 243–252 has biased composition (polar residues); that stretch reads HYGTHATSSY. The interval 341 to 362 is leucine-zipper-like; that stretch reads LSDVNDPLNCEIILLETNLELM. Residues 612–643 are disordered; it reads EGLSDKTAPTSVLDPFPNLTQQTTSQTAGINV. The span at 629-643 shows a compositional bias: polar residues; sequence NLTQQTTSQTAGINV.

The protein belongs to the TEC1 family.

It is found in the nucleus. Its function is as follows. BrlA, abaA and wetA are pivotal regulators of conidiophore development and conidium maturation. They act individually and together to regulate their own expression and that of numerous other sporulation-specific gene. Controls temporal and spatial specificity in Aspergillus development. Directs the differentiation of phialides and is continuously required for maintenance of their function. Expression of abaA leads to activation of brlA and wetA, cessation of vegetative growth, and accentuated cellular vacuolization. Binds to the sequence 5'-CATTCY-3', where Y is a pyrimidine, making both major- and minor-groove contacts. Multiple abaA binding sites are present in the cis-acting regulatory regions of several developmentally controlled structural genes as well as those of the upstream regulatory gene brlA, the downstream regulatory gene wetA, and abaA itself. The polypeptide is Conidiophore development regulator abaA (Emericella nidulans (strain FGSC A4 / ATCC 38163 / CBS 112.46 / NRRL 194 / M139) (Aspergillus nidulans)).